A 637-amino-acid chain; its full sequence is Limonene synthase, chloroplastic (637 aa).

A chloroplast-targeting transit peptide spans 1 to 56 (MALLSIVSLQVPKSCGLKSLISSSNVQKALCISTAVPTLRMRRRQKALVINMKLTT). Mg(2+) contacts are provided by aspartate 388, aspartate 392, and aspartate 540. The DDXXD motif signature appears at 388-392 (DDIYD).

This sequence belongs to the terpene synthase family. Tpsd subfamily. Mg(2+) is required as a cofactor. Requires Mn(2+) as cofactor. K(+) serves as cofactor.

Its subcellular location is the plastid. The protein localises to the chloroplast. It carries out the reaction (2E)-geranyl diphosphate = (4S)-limonene + diphosphate. Its pathway is terpene metabolism; oleoresin biosynthesis. Functionally, involved in defensive oleoresin formation in conifers in response to insect attack or other injury. Involved in monoterpene (C10) olefins biosynthesis. This Abies grandis (Grand fir) protein is Limonene synthase, chloroplastic (ag10).